A 148-amino-acid chain; its full sequence is Protein ORM1 (148 aa).

4 helical membrane passes run 12–32 (WIIH…FPGV), 36–56 (WSWT…FHLI), 89–109 (FLII…HYDL), and 111–131 (MFSW…LPVT).

This sequence to yeast YLR350W C-terminus.

The protein localises to the membrane. The polypeptide is Protein ORM1 (ORM1) (Saccharomyces pastorianus (strain ATCC 76670 / Carlsberg bottom yeast no.2 / CBS 1503 / CLIB 180 / NBRC 10610 / NRRL Y-1525) (Saaz-type lager yeast)).